Here is a 108-residue protein sequence, read N- to C-terminus: uncharacterized protein (108 aa).

3 disulfides stabilise this stretch: cysteine 44–cysteine 82, cysteine 60–cysteine 78, and cysteine 63–cysteine 91.

Belongs to the arthropod CHH/MIH/GIH/VIH hormone family.

This is an uncharacterized protein from Caenorhabditis elegans.